A 623-amino-acid polypeptide reads, in one-letter code: MASQYAAELCMLLVEDNFGELFGRIFSTLHRYERLTLPRLLGLTRLSENRLRAALVAMIQHHLVHFYTAVEEGGVTYYSANMQAAYYLIRSGKILEFVEDRLGKYAATVMSTIMYLGHAQVSHLDTLPELRSDASKTNGVNEGEHDRPEGENETNGTNGEHVSDQPALLHPTLKALAGHGYIVRVREAHFQSIADNILNIERQIRSGDSVQSMKGKKLEEFVVEKTADMLKERLDGDLTRGLIVNGVPRGVKRSQTNGVSDDNETEKARFDYDDGEDEDEENEWLDDEVPMESSLTVRVNYEKLDVALRNRRFLELAERGAPPESAQIYDYLLRRIEYQTSKCRDASEIPREGEEGEQYSVPIPLSALARDIDPYLDLAGSLGPTNTPANNRLGKRTFDDTVDDNDDDHGATGNRTYEIDQHLSLLAQPPLNLTSKRLNGGIINWTVEFRHLARKLRHLELERIVEARYGDVALRVLRVLQAKGKLDEKRLQEISLLPFKDLRQVLASMQTGGFVDLQEVPRDAQRQPSRTIYLWYYDPDRARDSMLQDTYKAMSRCLQRLKFERGRLKDFLEKTERSDVKGNEELYLSEGELDRLREWRAKEALLIGEVARLDDMIAVMRDY.

3 disordered regions span residues 131–164, 249–282, and 381–412; these read RSDA…HVSD, RGVK…DEEN, and SLGP…HGAT. Over residues 273 to 282 the composition is skewed to acidic residues; the sequence is DDGEDEDEEN. Positions 550–571 are leucine-zipper; the sequence is TYKAMSRCLQRLKFERGRLKDF.

The protein belongs to the RNA polymerase beta chain family. In terms of assembly, component of the RNA polymerase III (Pol III) complex consisting of 17 subunits.

It is found in the nucleus. DNA-dependent RNA polymerase catalyzes the transcription of DNA into RNA using the four ribonucleoside triphosphates as substrates. Specific core component of RNA polymerase III which synthesizes small RNAs, such as 5S rRNA and tRNAs. This chain is DNA-directed RNA polymerase III subunit rpc3 (rpc82), found in Emericella nidulans (strain FGSC A4 / ATCC 38163 / CBS 112.46 / NRRL 194 / M139) (Aspergillus nidulans).